The chain runs to 500 residues: Aspartyl/glutamyl-tRNA(Asn/Gln) amidotransferase subunit B (500 aa).

Belongs to the GatB/GatE family. GatB subfamily. Heterotrimer of A, B and C subunits.

The catalysed reaction is L-glutamyl-tRNA(Gln) + L-glutamine + ATP + H2O = L-glutaminyl-tRNA(Gln) + L-glutamate + ADP + phosphate + H(+). It carries out the reaction L-aspartyl-tRNA(Asn) + L-glutamine + ATP + H2O = L-asparaginyl-tRNA(Asn) + L-glutamate + ADP + phosphate + 2 H(+). In terms of biological role, allows the formation of correctly charged Asn-tRNA(Asn) or Gln-tRNA(Gln) through the transamidation of misacylated Asp-tRNA(Asn) or Glu-tRNA(Gln) in organisms which lack either or both of asparaginyl-tRNA or glutaminyl-tRNA synthetases. The reaction takes place in the presence of glutamine and ATP through an activated phospho-Asp-tRNA(Asn) or phospho-Glu-tRNA(Gln). The polypeptide is Aspartyl/glutamyl-tRNA(Asn/Gln) amidotransferase subunit B (Brucella anthropi (strain ATCC 49188 / DSM 6882 / CCUG 24695 / JCM 21032 / LMG 3331 / NBRC 15819 / NCTC 12168 / Alc 37) (Ochrobactrum anthropi)).